The following is a 251-amino-acid chain: MRRKIVVGNWKMNNSVAESVQLATDVLAALGEGFSGCEVGIAPTYLALDATEKVIAESEVQLVAQNCHYENDGAFTGEVSARMILAVGCSSVIIGHSERRQYFGETNATVNLRIKKALSEGLNVILCVGETLAERESGVMETVISSQVREGLDGIIDISAIVIAYEPVWAIGTGKTASSAQAEEVHLFIRTLVTGLYGQTASEKVRIQYGGSVKPSNAAELFAMPNIDGGLIGGASLNADDFAAIVKAASV.

9–11 (NWK) serves as a coordination point for substrate. Histidine 96 acts as the Electrophile in catalysis. Residue glutamate 166 is the Proton acceptor of the active site. Substrate contacts are provided by residues glycine 172, serine 212, and 233 to 234 (GG).

The protein belongs to the triosephosphate isomerase family. Homodimer.

The protein resides in the cytoplasm. It carries out the reaction D-glyceraldehyde 3-phosphate = dihydroxyacetone phosphate. It functions in the pathway carbohydrate biosynthesis; gluconeogenesis. It participates in carbohydrate degradation; glycolysis; D-glyceraldehyde 3-phosphate from glycerone phosphate: step 1/1. Involved in the gluconeogenesis. Catalyzes stereospecifically the conversion of dihydroxyacetone phosphate (DHAP) to D-glyceraldehyde-3-phosphate (G3P). In Pelodictyon phaeoclathratiforme (strain DSM 5477 / BU-1), this protein is Triosephosphate isomerase.